Consider the following 298-residue polypeptide: Biphenyl-2,3-diol 1,2-dioxygenase (298 aa).

VOC domains follow at residues 5-119 (SLGY…IYYG) and 143-264 (GLGH…YGWS). His146, His210, and Glu260 together coordinate Fe cation.

The protein belongs to the extradiol ring-cleavage dioxygenase family. Homooctamer. The enzyme is composed of two planar tetramers rotated at 45 degrees relative to each other, with a channel in the middle. It depends on Fe(2+) as a cofactor.

The catalysed reaction is biphenyl-2,3-diol + O2 = 2-hydroxy-6-oxo-6-phenylhexa-2,4-dienoate + H(+). The protein operates within xenobiotic degradation; biphenyl degradation; 2-hydroxy-2,4-pentadienoate and benzoate from biphenyl: step 3/4. Functionally, shows a preference for catechols with groups immediately adjacent to the hydroxyl substituents. The polypeptide is Biphenyl-2,3-diol 1,2-dioxygenase (bphC) (Paraburkholderia xenovorans (strain LB400)).